Consider the following 576-residue polypeptide: Nuclear receptor subfamily 1 group D member 2 (576 aa).

Residues 1-60 (MELNAGGVIAYISSSSSASSPASCHSEGSENSFQSSSSSVPSSPNSSNCDANGNPKNADI) form a required for phosphorylation by CSNK1E and cytoplasmic localization region. Residues 1–99 (MELNAGGVIA…HSGMTKFSGM (99 aa)) are modulating. The segment covering 13-47 (SSSSSASSPASCHSEGSENSFQSSSSSVPSSPNSS) has biased composition (low complexity). A disordered region spans residues 13-90 (SSSSSASSPA…TSAPGMTKSH (78 aa)). Position 46 is a phosphoserine; by GSK3-beta (Ser46). Residues 100–176 (VLLCKVCGDV…VGMSRDAVRF (77 aa)) constitute a DNA-binding region (nuclear receptor). 2 consecutive NR C4-type zinc fingers follow at residues 103–123 (CKVC…CEGC) and 140–164 (CLKN…FKKC). N6-acetyllysine; by KAT5 is present on residues Lys162 and Lys163. 2 disordered regions span residues 215-246 (QHDQ…SDFA) and 263-282 (LYNQ…QRGE). Basic and acidic residues-rich tracts occupy residues 227–237 (LRPKSQLEQEN) and 263–272 (LYNQEHRENS). 2 disulfide bridges follow: Cys334-Cys340 and Cys371-Cys381. The NR LBD domain maps to 366–576 (RNSYLCNTGG…EELLAFKVHP (211 aa)). Positions 381 and 565 each coordinate heme. Positions 394 to 576 (SGHEIWEEFS…EELLAFKVHP (183 aa)) are interaction with ZNHIT1.

Belongs to the nuclear hormone receptor family. NR1 subfamily. Binds DNA as a monomer or a homodimer. Interacts with NCOA5 coactivator, leading to a strong increase of transcription of target genes. Interacts (via N-terminus) with KAT5. Interacts (via C-terminus) with HDAC1. Interacts with ZNHIT1. Interacts with SIAH2. In terms of processing, deacetylated by HDAC1. Acetylation and deacetylation regulate its transcriptional regulatory activity. Post-translationally, under more reducing intracellular redox conditions, Cys-381 is in its heme-bound state, which is optimal for recruitment of the NCOR1/HDAC3 corepressor complex and repression of target genes. When subjected to oxidative stress conditions, Cys-381 undergoes oxidation to form a disulfide bridge with Cys-371, also triggering a ligand switch that results in release of bound heme and derepression of target genes. Ubiquitinated by SIAH2; leading to its proteasomal degradation. In terms of processing, phosphorylated by CSNK1E; phosphorylation enhances its cytoplasmic localization. In terms of tissue distribution, ubiquitous. Expressed abundantly in skeletal muscle and brown adipose tissue. Expressed during skeletal muscle myogenesis.

Its subcellular location is the nucleus. It is found in the cytoplasm. Its activity is regulated as follows. The heme-bound form can bind gaseous signaling molecules such as CO and nitric oxide (NO) and NO can reverse its transcriptional repressor activity. In terms of biological role, transcriptional repressor which coordinates circadian rhythm and metabolic pathways in a heme-dependent manner. Integral component of the complex transcription machinery that governs circadian rhythmicity and forms a critical negative limb of the circadian clock by directly repressing the expression of core clock components BMAL1 and CLOCK. Also regulates genes involved in metabolic functions, including lipid metabolism and the inflammatory response. Acts as a receptor for heme which stimulates its interaction with the NCOR1/HDAC3 corepressor complex, enhancing transcriptional repression. Recognizes two classes of DNA response elements within the promoter of its target genes and can bind to DNA as either monomers or homodimers, depending on the nature of the response element. Binds as a monomer to a response element composed of the consensus half-site motif 5'-[A/G]GGTCA-3' preceded by an A/T-rich 5' sequence (RevRE), or as a homodimer to a direct repeat of the core motif spaced by two nuclegotides (RevDR-2). Acts as a potent competitive repressor of ROR alpha (RORA) function and also negatively regulates the expression of NR1D1. Regulates lipid and energy homeostasis in the skeletal muscle via repression of genes involved in lipid metabolism and myogenesis including: CD36, FABP3, FABP4, UCP3, SCD1 and MSTN. Regulates hepatic lipid metabolism via the repression of APOC3. Represses gene expression at a distance in macrophages by inhibiting the transcription of enhancer-derived RNAs (eRNAs). In addition to its activity as a repressor, can also act as a transcriptional activator. Acts as a transcriptional activator of the sterol regulatory element-binding protein 1 (SREBF1) and the inflammatory mediator interleukin-6 (IL6) in the skeletal muscle. Plays a role in the regulation of circadian sleep/wake cycle; essential for maintaining wakefulness during the dark phase or active period. Key regulator of skeletal muscle mitochondrial function; negatively regulates the skeletal muscle expression of core clock genes and genes involved in mitochondrial biogenesis, fatty acid beta-oxidation and lipid metabolism. May play a role in the circadian control of neutrophilic inflammation in the lung. This Mus musculus (Mouse) protein is Nuclear receptor subfamily 1 group D member 2.